The primary structure comprises 101 residues: Small ribosomal subunit protein uS14 (101 aa).

This sequence belongs to the universal ribosomal protein uS14 family. Part of the 30S ribosomal subunit. Contacts proteins S3 and S10.

Functionally, binds 16S rRNA, required for the assembly of 30S particles and may also be responsible for determining the conformation of the 16S rRNA at the A site. This chain is Small ribosomal subunit protein uS14, found in Vesicomyosocius okutanii subsp. Calyptogena okutanii (strain HA).